The chain runs to 193 residues: Transmembrane protein 276 (193 aa).

The N-terminal stretch at 1-32 (MTPRPGGEWSSALSHLALGAVSLHAALSTAQA) is a signal peptide. Helical transmembrane passes span 35 to 55 (GAAA…ASGL), 63 to 83 (AGAW…FHWV), 89 to 109 (SANL…HLGA), and 114 to 134 (VAGQ…AVFT).

The protein resides in the membrane. This Bos taurus (Bovine) protein is Transmembrane protein 276.